Here is a 435-residue protein sequence, read N- to C-terminus: uncharacterized protein (435 aa).

Residue Ser47 is modified to Phosphoserine. 2 disordered regions span residues 174–210 (LKKKKESIKTAQTTEAQGADHNEEDEEDEEDEEDDED) and 290–372 (KAEA…EDNK). The segment covering 195–210 (NEEDEEDEEDEEDDED) has biased composition (acidic residues). Over residues 290–304 (KAEATGEAHSKDVSA) the composition is skewed to basic and acidic residues. Over residues 308 to 318 (SANTTTSFDET) the composition is skewed to polar residues. Composition is skewed to basic and acidic residues over residues 322-340 (EDEKPKSEGAEEESKKEAN) and 347-361 (VADRKEDLKSNKVND).

It is found in the cytoplasm. This is an uncharacterized protein from Saccharomyces cerevisiae (strain ATCC 204508 / S288c) (Baker's yeast).